The chain runs to 373 residues: 3 beta-hydroxysteroid dehydrogenase/Delta 5--&gt;4-isomerase (373 aa).

Catalysis depends on Y155, which acts as the Proton acceptor. Position 159 (K159) interacts with NAD(+). The helical transmembrane segment at 288-308 (IFLKYWLAFLLEIVSFLLSPI) threads the bilayer.

This sequence belongs to the 3-beta-HSD family.

It is found in the endoplasmic reticulum membrane. The protein localises to the mitochondrion membrane. The enzyme catalyses a 3beta-hydroxy-Delta(5)-steroid + NAD(+) = a 3-oxo-Delta(5)-steroid + NADH + H(+). It carries out the reaction a 3-oxo-Delta(5)-steroid = a 3-oxo-Delta(4)-steroid. Its pathway is lipid metabolism; steroid biosynthesis. Functionally, 3-beta-HSD is a bifunctional enzyme, that catalyzes the oxidative conversion of Delta(5)-ene-3-beta-hydroxy steroid, and the oxidative conversion of ketosteroids. The 3-beta-HSD enzymatic system plays a crucial role in the biosynthesis of all classes of hormonal steroids. This chain is 3 beta-hydroxysteroid dehydrogenase/Delta 5--&gt;4-isomerase (HSD3B), found in Equus caballus (Horse).